Reading from the N-terminus, the 500-residue chain is Polyenoic fatty acid isomerase (500 aa).

The N-terminal stretch at methionine 1–threonine 21 is a signal peptide.

Homodimer. An oxidized flavin is required as a cofactor. In terms of processing, glycosylated.

The enzyme catalyses (5Z,8Z,11Z,14Z,17Z)-eicosapentaenoate = (5Z,7E,9E,14Z,17Z)-icosapentaenoate. In terms of biological role, involved in the biosynthesis of conjugated triene-containing fatty acids. Catalyzes the isomerization of a wide range of substrates containing three or more methylene interrupted olefins into a Z,E,E conjugated triene functionality. May be involved in a stress tolerance mechanism as response to intertidal habitats with direct sunlight, desiccation and high temperature. In vitro substrates include arachidonic acid ((5Z,8Z,11Z,14Z)-eicosatetraenoic acid), EPA ((5Z,8Z, 11Z,14Z,17Z)-eicosapentaenoic acid), DHA ((4Z,7Z,10Z,13Z,16Z,19Z)-docosahexenoic acid), adrenic acid ((7Z,10Z,13Z,16Z)-docosatetraenoic acid), anandamide (arachidonyl-N-ethanolamide) and eicosatrienoic acid ((5Z,8Z,11Z)-eicosatrienoic acid). Gamma-linolenic acid (18:3 6Z,9Z,12Z) and dihomo-gamma-linolenic acid (20:3 8Z,11Z,14Z) are transformed into mixtures of conjugated diene and triene fatty acids, linoleic acid is only transformed to a conjugated diene. The chain is Polyenoic fatty acid isomerase from Ptilota filicina (Red alga).